The following is a 333-amino-acid chain: Protoheme IX farnesyltransferase (333 aa).

Transmembrane regions (helical) follow at residues 36 to 56 (LIPLLLATTLGGMALTEGWPL), 61 to 81 (LVCTLGGGALAAAAAGVLNCL), 107 to 127 (AAFAGAVSCALAAATLLVSGV), 130 to 150 (LAAGLSLLGLCSYVLLYTALL), 158 to 178 (IVIGGVAGAIPPLVGAAAATG), 186 to 206 (WLFALVMVWTPAHFWALALLL), 243 to 263 (FLGVWALPEGGLLYGLLLLPF), and 284 to 304 (AKGLFRWSILYLFGICLLLVF).

It belongs to the UbiA prenyltransferase family. Protoheme IX farnesyltransferase subfamily.

The protein localises to the cell inner membrane. It catalyses the reaction heme b + (2E,6E)-farnesyl diphosphate + H2O = Fe(II)-heme o + diphosphate. It functions in the pathway porphyrin-containing compound metabolism; heme O biosynthesis; heme O from protoheme: step 1/1. In terms of biological role, converts heme B (protoheme IX) to heme O by substitution of the vinyl group on carbon 2 of heme B porphyrin ring with a hydroxyethyl farnesyl side group. In Synechococcus sp. (strain WH7803), this protein is Protoheme IX farnesyltransferase.